Consider the following 128-residue polypeptide: Fluoride-specific ion channel FluC (128 aa).

A run of 4 helical transmembrane segments spans residues 2 to 22 (FYSIVAIFVGAGLGALLRWCL), 35 to 55 (LGTLAANLLGGYVIGVAAVVF), 67 to 87 (LFVITGFLGGLTTFSTYSVEV), and 96 to 116 (FGWALAVAALHLTGSFALTAL). Na(+) contacts are provided by Gly-75 and Thr-78.

It belongs to the fluoride channel Fluc/FEX (TC 1.A.43) family.

Its subcellular location is the cell inner membrane. The catalysed reaction is fluoride(in) = fluoride(out). Its activity is regulated as follows. Na(+) is not transported, but it plays an essential structural role and its presence is essential for fluoride channel function. Fluoride-specific ion channel. Important for reducing fluoride concentration in the cell, thus reducing its toxicity. This chain is Fluoride-specific ion channel FluC, found in Burkholderia cenocepacia (strain ATCC BAA-245 / DSM 16553 / LMG 16656 / NCTC 13227 / J2315 / CF5610) (Burkholderia cepacia (strain J2315)).